The chain runs to 397 residues: Riboflavin biosynthesis protein RibBA (397 aa).

Residues 1–199 (MFHRIEEALE…IEDLIAYRRH (199 aa)) form a DHBP synthase region. D-ribulose 5-phosphate is bound by residues 26 to 27 (RE), Asp31, 138 to 142 (RAGHT), and Glu162. Residue Glu27 participates in Mg(2+) binding. His141 is a binding site for Mg(2+). Residues 200 to 397 (HETLVTREVE…VNKLGHLLNL (198 aa)) are GTP cyclohydrolase II. 250–254 (RVHSE) is a GTP binding site. 3 residues coordinate Zn(2+): Cys255, Cys266, and Cys268. GTP is bound by residues Gln271, 293–295 (EGR), and Thr315. Asp327 serves as the catalytic Proton acceptor; for GTP cyclohydrolase activity. The active-site Nucleophile; for GTP cyclohydrolase activity is the Arg329. GTP contacts are provided by Thr350 and Lys355.

The protein in the N-terminal section; belongs to the DHBP synthase family. In the C-terminal section; belongs to the GTP cyclohydrolase II family. Requires Mg(2+) as cofactor. Mn(2+) is required as a cofactor. The cofactor is Zn(2+).

It carries out the reaction D-ribulose 5-phosphate = (2S)-2-hydroxy-3-oxobutyl phosphate + formate + H(+). It catalyses the reaction GTP + 4 H2O = 2,5-diamino-6-hydroxy-4-(5-phosphoribosylamino)-pyrimidine + formate + 2 phosphate + 3 H(+). It participates in cofactor biosynthesis; riboflavin biosynthesis; 2-hydroxy-3-oxobutyl phosphate from D-ribulose 5-phosphate: step 1/1. It functions in the pathway cofactor biosynthesis; riboflavin biosynthesis; 5-amino-6-(D-ribitylamino)uracil from GTP: step 1/4. Functionally, catalyzes the conversion of D-ribulose 5-phosphate to formate and 3,4-dihydroxy-2-butanone 4-phosphate. In terms of biological role, catalyzes the conversion of GTP to 2,5-diamino-6-ribosylamino-4(3H)-pyrimidinone 5'-phosphate (DARP), formate and pyrophosphate. This is Riboflavin biosynthesis protein RibBA from Bacillus cereus (strain AH187).